The following is a 353-amino-acid chain: Photosystem II D2 protein (353 aa).

Thr-2 carries the post-translational modification N-acetylthreonine. Thr-2 carries the post-translational modification Phosphothreonine. A helical membrane pass occupies residues 41–61 (CAYFALGGWFTGTTFVTSWYT). Chlorophyll a is bound at residue His-118. The helical transmembrane segment at 125–141 (GFMLRQFELARSVQLRP) threads the bilayer. Gln-130 and Asn-143 together coordinate pheophytin a. A helical membrane pass occupies residues 153 to 166 (VFVSVFFIYPLGQS). His-198 is a binding site for chlorophyll a. Residues 208-228 (AALLCAIHGATVENTLFEDGD) traverse the membrane as a helical segment. 2 residues coordinate a plastoquinone: His-215 and Phe-262. His-215 contacts Fe cation. Fe cation is bound at residue His-269. A helical transmembrane segment spans residues 279 to 295 (GLWMSALGVVGLALNLR).

Belongs to the reaction center PufL/M/PsbA/D family. As to quaternary structure, PSII is composed of 1 copy each of membrane proteins PsbA, PsbB, PsbC, PsbD, PsbE, PsbF, PsbH, PsbI, PsbJ, PsbK, PsbL, PsbM, PsbT, PsbX, PsbY, PsbZ, Psb30/Ycf12, at least 3 peripheral proteins of the oxygen-evolving complex and a large number of cofactors. It forms dimeric complexes. The cofactor is The D1/D2 heterodimer binds P680, chlorophylls that are the primary electron donor of PSII, and subsequent electron acceptors. It shares a non-heme iron and each subunit binds pheophytin, quinone, additional chlorophylls, carotenoids and lipids. There is also a Cl(-1) ion associated with D1 and D2, which is required for oxygen evolution. The PSII complex binds additional chlorophylls, carotenoids and specific lipids..

It localises to the plastid membrane. It carries out the reaction 2 a plastoquinone + 4 hnu + 2 H2O = 2 a plastoquinol + O2. In terms of biological role, photosystem II (PSII) is a light-driven water:plastoquinone oxidoreductase that uses light energy to abstract electrons from H(2)O, generating O(2) and a proton gradient subsequently used for ATP formation. It consists of a core antenna complex that captures photons, and an electron transfer chain that converts photonic excitation into a charge separation. The D1/D2 (PsbA/PsbD) reaction center heterodimer binds P680, the primary electron donor of PSII as well as several subsequent electron acceptors. D2 is needed for assembly of a stable PSII complex. The polypeptide is Photosystem II D2 protein (Cuscuta exaltata (Tall dodder)).